A 186-amino-acid polypeptide reads, in one-letter code: Ran guanine nucleotide release factor (186 aa).

Residues 27–70 form an interaction with RAN region; the sequence is DLRPVPDNQEVFCHPVTDQSLIVELLELQAHVRGEAAARYHFED.

Belongs to the MOG1 family. Monomer. Interacts with RAN, both RAN-GTP and RAN-GDP. Competes with RCC1 for a common binding site on RAN and thereby inhibits RCC1-mediated nucleotide exchange. Forms a complex with RAN-GTP and RANBP1. Interacts with the cytoplasmic loop 2 of SCN5A. As to expression, isoform 1 and isoform 2 are ubiquitously expressed. Detected in heart and brain.

The protein localises to the nucleus. It localises to the cytoplasm. It is found in the perinuclear region. Its subcellular location is the cell membrane. Its function is as follows. May regulate the intracellular trafficking of RAN. Promotes guanine nucleotide release from RAN and inhibits binding of new GTP by preventing the binding of the RAN guanine nucleotide exchange factor RCC1. Regulates the levels of GTP-bound RAN in the nucleus, and thereby plays a role in the regulation of RAN-dependent mitotic spindle dynamics. Enhances the expression of SCN5A at the cell membrane in cardiomyocytes. The chain is Ran guanine nucleotide release factor (RANGRF) from Homo sapiens (Human).